The following is a 376-amino-acid chain: N-acetyldiaminopimelate deacetylase (376 aa).

The active site involves D69. The Proton acceptor role is filled by E128.

It belongs to the peptidase M20A family. N-acetyldiaminopimelate deacetylase subfamily.

It catalyses the reaction N-acetyl-(2S,6S)-2,6-diaminopimelate + H2O = (2S,6S)-2,6-diaminopimelate + acetate. The protein operates within amino-acid biosynthesis; L-lysine biosynthesis via DAP pathway; LL-2,6-diaminopimelate from (S)-tetrahydrodipicolinate (acetylase route): step 3/3. Functionally, catalyzes the conversion of N-acetyl-diaminopimelate to diaminopimelate and acetate. This is N-acetyldiaminopimelate deacetylase from Streptococcus pneumoniae serotype 19F (strain G54).